The following is a 141-amino-acid chain: Hemoglobin subunit alpha (141 aa).

A Globin domain is found at Val1–Arg141. Ser3 carries the post-translational modification Phosphoserine. Lys7 and Lys11 each carry N6-succinyllysine. An N6-acetyllysine; alternate modification is found at Lys16. Lys16 is subject to N6-succinyllysine; alternate. Tyr24 carries the post-translational modification Phosphotyrosine. Position 40 is an N6-succinyllysine (Lys40). At Ser49 the chain carries Phosphoserine. His58 lines the O2 pocket. Heme b is bound at residue His87. The residue at position 102 (Ser102) is a Phosphoserine. At Thr108 the chain carries Phosphothreonine. Residue Ser124 is modified to Phosphoserine. Phosphothreonine is present on residues Thr134 and Thr137. Ser138 is modified (phosphoserine).

It belongs to the globin family. As to quaternary structure, heterotetramer of two alpha chains and two beta chains. As to expression, red blood cells.

In terms of biological role, involved in oxygen transport from the lung to the various peripheral tissues. Its function is as follows. Hemopressin acts as an antagonist peptide of the cannabinoid receptor CNR1. Hemopressin-binding efficiently blocks cannabinoid receptor CNR1 and subsequent signaling. This Lama vicugna (Vicugna) protein is Hemoglobin subunit alpha (HBA).